A 119-amino-acid polypeptide reads, in one-letter code: Inner membrane protein YijD (119 aa).

The Cytoplasmic segment spans residues 1 to 8 (MKQANQDR). Residues 9-28 (GTLLLALVAGLSINGTFAAL) traverse the membrane as a helical segment. Topologically, residues 29 to 31 (FSS) are periplasmic. Residues 32–50 (IVPFSVFPIISLVLTVYCL) form a helical membrane-spanning segment. Topologically, residues 51–61 (HQRYLNRTMPV) are cytoplasmic. Residues 62–84 (GLPGLAAACFILGVLLYSTVVRA) form a helical membrane-spanning segment. The Periplasmic portion of the chain corresponds to 85–88 (EYPD). A helical membrane pass occupies residues 89–108 (IGSNFFPAVLSVIMVFWIGA). Topologically, residues 109 to 119 (KMRNRKQEVAE) are cytoplasmic.

Its subcellular location is the cell inner membrane. The chain is Inner membrane protein YijD (yijD) from Escherichia coli O6:H1 (strain CFT073 / ATCC 700928 / UPEC).